The chain runs to 209 residues: Uracil phosphoribosyltransferase (209 aa).

5-phospho-alpha-D-ribose 1-diphosphate contacts are provided by residues arginine 79, arginine 104, and 131 to 139 (DPMLATGNS). Uracil is bound by residues isoleucine 194 and 199–201 (GDA). Position 200 (aspartate 200) interacts with 5-phospho-alpha-D-ribose 1-diphosphate.

The protein belongs to the UPRTase family. It depends on Mg(2+) as a cofactor.

It catalyses the reaction UMP + diphosphate = 5-phospho-alpha-D-ribose 1-diphosphate + uracil. The protein operates within pyrimidine metabolism; UMP biosynthesis via salvage pathway; UMP from uracil: step 1/1. Its activity is regulated as follows. Allosterically activated by GTP. In terms of biological role, catalyzes the conversion of uracil and 5-phospho-alpha-D-ribose 1-diphosphate (PRPP) to UMP and diphosphate. This is Uracil phosphoribosyltransferase from Rhizobium rhizogenes (strain K84 / ATCC BAA-868) (Agrobacterium radiobacter).